The primary structure comprises 56 residues: Large ribosomal subunit protein bL33 (56 aa).

The protein belongs to the bacterial ribosomal protein bL33 family.

In Aliarcobacter butzleri (strain RM4018) (Arcobacter butzleri), this protein is Large ribosomal subunit protein bL33.